The following is a 130-amino-acid chain: Large ribosomal subunit protein bL12 (130 aa).

The protein belongs to the bacterial ribosomal protein bL12 family. As to quaternary structure, homodimer. Part of the ribosomal stalk of the 50S ribosomal subunit. Forms a multimeric L10(L12)X complex, where L10 forms an elongated spine to which 2 to 4 L12 dimers bind in a sequential fashion. Binds GTP-bound translation factors.

Forms part of the ribosomal stalk which helps the ribosome interact with GTP-bound translation factors. Is thus essential for accurate translation. The chain is Large ribosomal subunit protein bL12 from Mycobacterium leprae (strain TN).